Reading from the N-terminus, the 464-residue chain is ATP-dependent protease ATPase subunit HslU (464 aa).

Residues valine 19, 61 to 66 (GVGKTE), aspartate 278, glutamate 342, and arginine 414 each bind ATP.

The protein belongs to the ClpX chaperone family. HslU subfamily. As to quaternary structure, a double ring-shaped homohexamer of HslV is capped on each side by a ring-shaped HslU homohexamer. The assembly of the HslU/HslV complex is dependent on binding of ATP.

The protein localises to the cytoplasm. In terms of biological role, ATPase subunit of a proteasome-like degradation complex; this subunit has chaperone activity. The binding of ATP and its subsequent hydrolysis by HslU are essential for unfolding of protein substrates subsequently hydrolyzed by HslV. HslU recognizes the N-terminal part of its protein substrates and unfolds these before they are guided to HslV for hydrolysis. The chain is ATP-dependent protease ATPase subunit HslU from Halalkalibacterium halodurans (strain ATCC BAA-125 / DSM 18197 / FERM 7344 / JCM 9153 / C-125) (Bacillus halodurans).